A 513-amino-acid chain; its full sequence is Cytochrome P450 monooxygenase eqxH (513 aa).

Residues 13 to 32 (QYAILCGITVFTLFIVQLSL) traverse the membrane as a helical segment. Residues Asn-130 and Asn-295 are each glycosylated (N-linked (GlcNAc...) asparagine). Cys-449 is a binding site for heme.

This sequence belongs to the cytochrome P450 family. The cofactor is heme.

Its subcellular location is the membrane. It functions in the pathway mycotoxin biosynthesis. Functionally, cytochrome P450 monooxygenase; part of the gene cluster that mediates the biosynthesis of equisetin, a trans-fused decalin-containing tetramic acid with antimicrobial activity. The PKS module of eqxS together with the enoylreductase eqxC catalyze the formation of the polyketide unit which is then conjugated to L-serine by the condensation domain of the eqxS NRPS module. Activity of the Dieckmann cyclase domain (RED) results in release of the Dieckmann product intermediate. Diels-Alderase eqx3 is involved in endo-selective Diels-Alder cycloaddition to form the decalin ring, leading to the production of N-desmethylequisetin also called trichosetin. Subsequent N-methylation is carried out by eqxD to give equisetin. In Fusarium heterosporum, this protein is Cytochrome P450 monooxygenase eqxH.